The primary structure comprises 88 residues: Small ribosomal subunit protein bS16 (88 aa).

Belongs to the bacterial ribosomal protein bS16 family.

The protein is Small ribosomal subunit protein bS16 of Thermus aquaticus.